The following is a 452-amino-acid chain: Prephenate dehydrogenase [NADP(+)] (452 aa).

NADP(+) is bound at residue 14-43 (KVIGIIGLGDMGLLYANKFTDAGWGVICCD). The Prephenate/arogenate dehydrogenase domain maps to 14–297 (KVIGIIGLGD…GKHTGLLLLD (284 aa)).

This sequence belongs to the prephenate/arogenate dehydrogenase family.

The enzyme catalyses prephenate + NADP(+) = 3-(4-hydroxyphenyl)pyruvate + CO2 + NADPH. The protein operates within amino-acid biosynthesis; L-tyrosine biosynthesis; (4-hydroxyphenyl)pyruvate from prephenate (NADP(+) route): step 1/1. The polypeptide is Prephenate dehydrogenase [NADP(+)] (TYR1) (Saccharomyces cerevisiae (strain ATCC 204508 / S288c) (Baker's yeast)).